We begin with the raw amino-acid sequence, 1080 residues long: Serine/threonine-protein kinase KIC1 (1080 aa).

Residues 23–276 form the Protein kinase domain; sequence FKRTEVIGRG…ADDLLKSKFI (254 aa). Residues 29 to 37 and Lys52 contribute to the ATP site; that span reads IGRGKFGVV. Asp144 serves as the catalytic Proton acceptor. Disordered stretches follow at residues 308-347, 615-760, 787-831, and 901-956; these read EGSIPENEPSKPSEAPKPSQNGGGDEAQKSIASNDNEIKR, KARS…LAPP, STLN…LQMP, and SQSI…NTGN. Low complexity predominate over residues 312 to 326; the sequence is PENEPSKPSEAPKPS. Polar residues predominate over residues 615 to 626; that stretch reads KARSSTVTAGTP. The span at 627–638 shows a compositional bias: low complexity; sequence SSSSSIQYKSPS. The span at 656–673 shows a compositional bias: polar residues; it reads STITNQKLGSAVASNSGI. The span at 674 to 689 shows a compositional bias: low complexity; the sequence is SSTPNNSNNYNNNTDS. Over residues 693–726 the composition is skewed to polar residues; sequence RGSSGSNTANSTQMGITNPGNVTKLSTHKASSPS. A Phosphoserine modification is found at Ser735. The segment covering 743 to 756 has biased composition (polar residues); the sequence is SPTQNIGHNSTHTN. Residues 787–807 are compositionally biased toward low complexity; sequence STLNTISGNSSNNLTSSNYFS. The segment covering 808–821 has biased composition (basic and acidic residues); that stretch reads NEKEGSRVNGDFKR. Polar residues predominate over residues 901–913; that stretch reads SQSISNRKNSSAS. Over residues 918–956 the composition is skewed to low complexity; it reads NILGSSVSGNVSGIGNNNVGSNNNSGPNNSVPLSANTGN.

This sequence belongs to the protein kinase superfamily. Ser/Thr protein kinase family. As to quaternary structure, interacts with CDC31.

The catalysed reaction is L-seryl-[protein] + ATP = O-phospho-L-seryl-[protein] + ADP + H(+). It catalyses the reaction L-threonyl-[protein] + ATP = O-phospho-L-threonyl-[protein] + ADP + H(+). Its function is as follows. Protein kinase involved in morphogenesis and cell integrity. This Saccharomyces cerevisiae (strain ATCC 204508 / S288c) (Baker's yeast) protein is Serine/threonine-protein kinase KIC1 (KIC1).